The chain runs to 353 residues: Histidinol-phosphate aminotransferase (353 aa).

Lys-211 carries the post-translational modification N6-(pyridoxal phosphate)lysine.

It belongs to the class-II pyridoxal-phosphate-dependent aminotransferase family. Histidinol-phosphate aminotransferase subfamily. In terms of assembly, homodimer. Pyridoxal 5'-phosphate serves as cofactor.

The enzyme catalyses L-histidinol phosphate + 2-oxoglutarate = 3-(imidazol-4-yl)-2-oxopropyl phosphate + L-glutamate. The protein operates within amino-acid biosynthesis; L-histidine biosynthesis; L-histidine from 5-phospho-alpha-D-ribose 1-diphosphate: step 7/9. This chain is Histidinol-phosphate aminotransferase, found in Klebsiella pneumoniae (strain 342).